The following is a 291-amino-acid chain: Protein ILRUN (291 aa).

A disordered region spans residues 199–291; sequence NTQPHRKVEG…LHGPYPFGQS (93 aa). Positions 212–228 are enriched in polar residues; it reads PFASPQKNRQSDENNLT. S215, S222, and S265 each carry phosphoserine. Residues 257–276 show a composition bias toward low complexity; that stretch reads LSQSSVNLSPSSPANNLSVV.

Interacts with IRF3; the interaction inhibits IRF3 binding to its DNA consensus sequence.

Its subcellular location is the cytoplasm. The protein localises to the nucleus. In terms of biological role, negative regulator of innate antiviral response. Blocks IRF3-dependent cytokine production such as IFNA, IFNB and TNF. Interacts with IRF3 and inhibits IRF3 recruitment to type I IFN promoter sequences while also reducing nuclear levels of the coactivators EP300 and CREBBP. The polypeptide is Protein ILRUN (Mus musculus (Mouse)).